The chain runs to 169 residues: 6,7-dimethyl-8-ribityllumazine synthase (169 aa).

5-amino-6-(D-ribitylamino)uracil contacts are provided by residues tyrosine 30, 61-63 (ALE), and 90-92 (CVI). 95–96 (ET) contributes to the (2S)-2-hydroxy-3-oxobutyl phosphate binding site. Histidine 98 (proton donor) is an active-site residue. Asparagine 123 contacts 5-amino-6-(D-ribitylamino)uracil. Arginine 137 contacts (2S)-2-hydroxy-3-oxobutyl phosphate.

Belongs to the DMRL synthase family.

The catalysed reaction is (2S)-2-hydroxy-3-oxobutyl phosphate + 5-amino-6-(D-ribitylamino)uracil = 6,7-dimethyl-8-(1-D-ribityl)lumazine + phosphate + 2 H2O + H(+). The protein operates within cofactor biosynthesis; riboflavin biosynthesis; riboflavin from 2-hydroxy-3-oxobutyl phosphate and 5-amino-6-(D-ribitylamino)uracil: step 1/2. Its function is as follows. Catalyzes the formation of 6,7-dimethyl-8-ribityllumazine by condensation of 5-amino-6-(D-ribitylamino)uracil with 3,4-dihydroxy-2-butanone 4-phosphate. This is the penultimate step in the biosynthesis of riboflavin. The polypeptide is 6,7-dimethyl-8-ribityllumazine synthase (Methylorubrum populi (strain ATCC BAA-705 / NCIMB 13946 / BJ001) (Methylobacterium populi)).